The following is a 159-amino-acid chain: Na(+)/H(+) antiporter subunit E1 (159 aa).

4 helical membrane passes run 1–21 (MAIQIILNFILAFIWIFLSGS), 27–47 (LLLGFILGLGFVYLFSRILPG), 49–69 (FYFIKIYKILKLAVVFFVELL), and 101–121 (WQIVLLSNLITLTPGTVVLGI).

Belongs to the CPA3 antiporters (TC 2.A.63) subunit E family. In terms of assembly, may form a heterooligomeric complex that consists of seven subunits: mnhA1, mnhB1, mnhC1, mnhD1, mnhE1, mnhF1 and mnhG1.

Its subcellular location is the cell membrane. Mnh complex is a Na(+)/H(+) antiporter involved in Na(+) excretion. This chain is Na(+)/H(+) antiporter subunit E1 (mnhE1), found in Staphylococcus haemolyticus (strain JCSC1435).